The following is a 366-amino-acid chain: Histidinol-phosphate aminotransferase 2 (366 aa).

The segment covering 1–11 (MQVKDQLSSLQ) has biased composition (polar residues). Positions 1-21 (MQVKDQLSSLQPYKPGKSPEQ) are disordered. An N6-(pyridoxal phosphate)lysine modification is found at Lys222.

This sequence belongs to the class-II pyridoxal-phosphate-dependent aminotransferase family. Histidinol-phosphate aminotransferase subfamily. As to quaternary structure, homodimer. It depends on pyridoxal 5'-phosphate as a cofactor.

The enzyme catalyses L-histidinol phosphate + 2-oxoglutarate = 3-(imidazol-4-yl)-2-oxopropyl phosphate + L-glutamate. The protein operates within amino-acid biosynthesis; L-histidine biosynthesis; L-histidine from 5-phospho-alpha-D-ribose 1-diphosphate: step 7/9. The protein is Histidinol-phosphate aminotransferase 2 of Bacillus thuringiensis subsp. konkukian (strain 97-27).